Reading from the N-terminus, the 104-residue chain is Large ribosomal subunit protein bL21 (104 aa).

The segment covering 81–90 (QGYRRHHGHR) has biased composition (basic residues). Positions 81–104 (QGYRRHHGHRQPYTQVKITGISAG) are disordered.

This sequence belongs to the bacterial ribosomal protein bL21 family. Part of the 50S ribosomal subunit. Contacts protein L20.

Its function is as follows. This protein binds to 23S rRNA in the presence of protein L20. The polypeptide is Large ribosomal subunit protein bL21 (Halorhodospira halophila (strain DSM 244 / SL1) (Ectothiorhodospira halophila (strain DSM 244 / SL1))).